The sequence spans 173 residues: Crossover junction endodeoxyribonuclease RuvC (173 aa).

Active-site residues include Asp-8, Glu-67, and Asp-139. 3 residues coordinate Mg(2+): Asp-8, Glu-67, and Asp-139.

This sequence belongs to the RuvC family. In terms of assembly, homodimer which binds Holliday junction (HJ) DNA. The HJ becomes 2-fold symmetrical on binding to RuvC with unstacked arms; it has a different conformation from HJ DNA in complex with RuvA. In the full resolvosome a probable DNA-RuvA(4)-RuvB(12)-RuvC(2) complex forms which resolves the HJ. The cofactor is Mg(2+).

Its subcellular location is the cytoplasm. It carries out the reaction Endonucleolytic cleavage at a junction such as a reciprocal single-stranded crossover between two homologous DNA duplexes (Holliday junction).. In terms of biological role, the RuvA-RuvB-RuvC complex processes Holliday junction (HJ) DNA during genetic recombination and DNA repair. Endonuclease that resolves HJ intermediates. Cleaves cruciform DNA by making single-stranded nicks across the HJ at symmetrical positions within the homologous arms, yielding a 5'-phosphate and a 3'-hydroxyl group; requires a central core of homology in the junction. The consensus cleavage sequence is 5'-(A/T)TT(C/G)-3'. Cleavage occurs on the 3'-side of the TT dinucleotide at the point of strand exchange. HJ branch migration catalyzed by RuvA-RuvB allows RuvC to scan DNA until it finds its consensus sequence, where it cleaves and resolves the cruciform DNA. This is Crossover junction endodeoxyribonuclease RuvC from Enterobacter sp. (strain 638).